The primary structure comprises 356 residues: GTPase HflX (356 aa).

The 177-residue stretch at 180–356 (PSIGIVGYTN…KIYQLATQLS (177 aa)) folds into the Hflx-type G domain. GTP contacts are provided by residues 186–193 (GYTNSGKT), 211–215 (FTTMS), 232–235 (DTVG), 300–303 (NKID), and 334–336 (SAL). Mg(2+)-binding residues include Thr193 and Thr213.

The protein belongs to the TRAFAC class OBG-HflX-like GTPase superfamily. HflX GTPase family. Monomer. Associates with the 50S ribosomal subunit. Does not associate with 70S ribosomes. Requires Mg(2+) as cofactor.

It localises to the cytoplasm. Its activity is regulated as follows. GTPase activity is stimulated by the presence of 50S ribosomal subunits. Hydrolysis is probably regulated by the HflX N-terminal domain. Its function is as follows. GTPase that associates with the 50S ribosomal subunit and may have a role during protein synthesis or ribosome biogenesis. Specific for GTP. The chain is GTPase HflX from Saccharolobus solfataricus (strain ATCC 35092 / DSM 1617 / JCM 11322 / P2) (Sulfolobus solfataricus).